Here is a 104-residue protein sequence, read N- to C-terminus: Large ribosomal subunit protein uL24 (104 aa).

This sequence belongs to the universal ribosomal protein uL24 family. As to quaternary structure, part of the 50S ribosomal subunit.

Functionally, one of two assembly initiator proteins, it binds directly to the 5'-end of the 23S rRNA, where it nucleates assembly of the 50S subunit. One of the proteins that surrounds the polypeptide exit tunnel on the outside of the subunit. The chain is Large ribosomal subunit protein uL24 from Pseudomonas entomophila (strain L48).